The chain runs to 120 residues: Large ribosomal subunit protein uL18 (120 aa).

Belongs to the universal ribosomal protein uL18 family. As to quaternary structure, part of the 50S ribosomal subunit; part of the 5S rRNA/L5/L18/L25 subcomplex. Contacts the 5S and 23S rRNAs.

This is one of the proteins that bind and probably mediate the attachment of the 5S RNA into the large ribosomal subunit, where it forms part of the central protuberance. The sequence is that of Large ribosomal subunit protein uL18 from Macrococcus caseolyticus (strain JCSC5402) (Macrococcoides caseolyticum).